Reading from the N-terminus, the 197-residue chain is Holliday junction branch migration complex subunit RuvA (197 aa).

Residues 1 to 63 (MFEYLNGKLV…EDAHSLYGFV (63 aa)) form a domain I region. The domain II stretch occupies residues 64-142 (NESEKALFLR…ATGAVGISLL (79 aa)). Residues 142 to 146 (LDAAP) form a flexible linker region. Residues 147-197 (AGNLALEEAIEALQALGYKATELKKIEKKLEQEAGLTSEEYIKSALKLMMK) are domain III.

This sequence belongs to the RuvA family. As to quaternary structure, homotetramer. Forms an RuvA(8)-RuvB(12)-Holliday junction (HJ) complex. HJ DNA is sandwiched between 2 RuvA tetramers; dsDNA enters through RuvA and exits via RuvB. An RuvB hexamer assembles on each DNA strand where it exits the tetramer. Each RuvB hexamer is contacted by two RuvA subunits (via domain III) on 2 adjacent RuvB subunits; this complex drives branch migration. In the full resolvosome a probable DNA-RuvA(4)-RuvB(12)-RuvC(2) complex forms which resolves the HJ.

Its subcellular location is the cytoplasm. Its function is as follows. The RuvA-RuvB-RuvC complex processes Holliday junction (HJ) DNA during genetic recombination and DNA repair, while the RuvA-RuvB complex plays an important role in the rescue of blocked DNA replication forks via replication fork reversal (RFR). RuvA specifically binds to HJ cruciform DNA, conferring on it an open structure. The RuvB hexamer acts as an ATP-dependent pump, pulling dsDNA into and through the RuvAB complex. HJ branch migration allows RuvC to scan DNA until it finds its consensus sequence, where it cleaves and resolves the cruciform DNA. This chain is Holliday junction branch migration complex subunit RuvA, found in Lactococcus lactis subsp. cremoris (strain SK11).